Here is a 373-residue protein sequence, read N- to C-terminus: ATP phosphoribosyltransferase regulatory subunit (373 aa).

This sequence belongs to the class-II aminoacyl-tRNA synthetase family. HisZ subfamily. In terms of assembly, heteromultimer composed of HisG and HisZ subunits.

The protein resides in the cytoplasm. It functions in the pathway amino-acid biosynthesis; L-histidine biosynthesis; L-histidine from 5-phospho-alpha-D-ribose 1-diphosphate: step 1/9. Required for the first step of histidine biosynthesis. May allow the feedback regulation of ATP phosphoribosyltransferase activity by histidine. This is ATP phosphoribosyltransferase regulatory subunit from Rhizobium etli (strain ATCC 51251 / DSM 11541 / JCM 21823 / NBRC 15573 / CFN 42).